A 540-amino-acid polypeptide reads, in one-letter code: Testis-specific chromodomain protein Y 1 (540 aa).

The Chromo domain maps to 6–66 (FEVEAIVDKR…RQTEKQKKLT (61 aa)). The interval 76–106 (NNARRRTSRSTKANYSKNSPKTPVTDKHHRS) is disordered. Positions 87-97 (KANYSKNSPKT) are enriched in polar residues.

Interacts (via chromo domain) with histone H3K9me3. Testis-specific. Detected in spermatids (at protein level).

It localises to the nucleus. It catalyses the reaction L-lysyl-[protein] + acetyl-CoA = N(6)-acetyl-L-lysyl-[protein] + CoA + H(+). Functionally, has histone acetyltransferase activity, with a preference for histone H4. The chain is Testis-specific chromodomain protein Y 1 (CDY1) from Homo sapiens (Human).